Consider the following 222-residue polypeptide: Germin-like protein subfamily 1 member 5 (222 aa).

Residues 1–24 (MKGLLHFLLAKIILLALASSFVYC) form the signal peptide. Cysteine 34 and cysteine 50 form a disulfide bridge. Asparagine 38 and asparagine 71 each carry an N-linked (GlcNAc...) asparagine glycan. The Cupin type-1 domain maps to 64–215 (SGLNVPGNTS…AFALDFNKVK (152 aa)). 3 residues coordinate Mn(2+): histidine 112, histidine 114, and glutamate 119. Residue asparagine 139 is glycosylated (N-linked (GlcNAc...) asparagine). Position 163 (histidine 163) interacts with Mn(2+).

The protein belongs to the germin family. In terms of assembly, oligomer (believed to be a pentamer but probably hexamer).

It localises to the secreted. Its subcellular location is the extracellular space. The protein localises to the apoplast. In terms of biological role, may play a role in plant defense. Probably has no oxalate oxidase activity even if the active site is conserved. This is Germin-like protein subfamily 1 member 5 from Arabidopsis thaliana (Mouse-ear cress).